Consider the following 261-residue polypeptide: UPF0246 protein PMI0005 (261 aa).

The protein belongs to the UPF0246 family.

This is UPF0246 protein PMI0005 from Proteus mirabilis (strain HI4320).